The following is a 271-amino-acid chain: MQAACWYVLLLLQPTVYLVTCANLTNGGKSELLKSGGSKSTLKHIWTESSKDLSISRLLSQTFRGKENDTDLDLRYDTPEPYSEQDLWDWLRNSTDLQEPRPRAKRRPIVKTGKFKKMFGWGDFHSNIKTVKLNLLITGKIVDHGNGTFSVYFRHNSTGQGNVSVSLVPPTKIVEFDLAQQTVIDAKDSKSFNCRIEYEKVDKATKNTLCNYDPSKTCYQEQTQSHVSWLCSKPFKVICIYISFYSTDYKLVQKVCPDYNYHSDTPYFPSG.

An N-terminal signal peptide occupies residues 1–21 (MQAACWYVLLLLQPTVYLVTC). The tract at residues 22–97 (ANLTNGGKSE…WDWLRNSTDL (76 aa)) is II. 6 N-linked (GlcNAc...) asparagine glycosylation sites follow: asparagine 23, asparagine 68, asparagine 93, asparagine 146, asparagine 156, and asparagine 162. The tract at residues 98-176 (QEPRPRAKRR…LVPPTKIVEF (79 aa)) is III. The interval 177–185 (DLAQQTVID) is IV (linker domain). Residues 186 to 271 (AKDSKSFNCR…HSDTPYFPSG (86 aa)) form a v (Cys-rich) region.

Belongs to the neurexophilin family. May be proteolytically processed at the boundary between the N-terminal non-conserved and the central conserved domain in neuron-like cells.

Its subcellular location is the secreted. May be signaling molecules that resemble neuropeptides. Ligand for alpha-neurexins. The protein is Neurexophilin-1 (NXPH1) of Bos taurus (Bovine).